A 611-amino-acid polypeptide reads, in one-letter code: tRNA uridine 5-carboxymethylaminomethyl modification enzyme MnmG (611 aa).

14-19 (GAGHAG) is an FAD binding site. 274 to 288 (GPRYCPSIEDKIVKF) lines the NAD(+) pocket.

Belongs to the MnmG family. Homodimer. Heterotetramer of two MnmE and two MnmG subunits. Requires FAD as cofactor.

It is found in the cytoplasm. NAD-binding protein involved in the addition of a carboxymethylaminomethyl (cmnm) group at the wobble position (U34) of certain tRNAs, forming tRNA-cmnm(5)s(2)U34. The polypeptide is tRNA uridine 5-carboxymethylaminomethyl modification enzyme MnmG (Chlamydia felis (strain Fe/C-56) (Chlamydophila felis)).